A 1162-amino-acid polypeptide reads, in one-letter code: Carbamoyl phosphate synthase large chain (1162 aa).

Positions 1–456 (MPKRTDIKSI…SLQKALRGLE (456 aa)) are carboxyphosphate synthetic domain. ATP-binding residues include R129, R222, G228, G229, E261, V263, E268, G294, V295, H296, Q338, and E352. The ATP-grasp 1 domain occupies 186-381 (ETEWQLGEVE…IAKVAAKLAV (196 aa)). Residues Q338, E352, and N354 each contribute to the Mg(2+) site. Mn(2+)-binding residues include Q338, E352, and N354. The tract at residues 457–613 (TGLTGFDEIA…PFVGQPRSEA (157 aa)) is oligomerization domain. The segment at 614–1025 (EVSDRKKVVI…AFAKAQLGAG (412 aa)) is carbamoyl phosphate synthetic domain. An ATP-grasp 2 domain is found at 742 to 954 (QKLLIKLDLN…IAKVAARIMA (213 aa)). ATP contacts are provided by R778, T838, L840, E845, G870, I871, H872, S873, Q913, and E925. Mg(2+)-binding residues include Q913, E925, and N927. Mn(2+) is bound by residues Q913, E925, and N927. Residues 1026-1162 (VELPREGTVF…VRPLQDYFRS (137 aa)) form the MGS-like domain. The allosteric domain stretch occupies residues 1026–1162 (VELPREGTVF…VRPLQDYFRS (137 aa)).

It belongs to the CarB family. Composed of two chains; the small (or glutamine) chain promotes the hydrolysis of glutamine to ammonia, which is used by the large (or ammonia) chain to synthesize carbamoyl phosphate. Tetramer of heterodimers (alpha,beta)4. Mg(2+) is required as a cofactor. It depends on Mn(2+) as a cofactor.

It carries out the reaction hydrogencarbonate + L-glutamine + 2 ATP + H2O = carbamoyl phosphate + L-glutamate + 2 ADP + phosphate + 2 H(+). The enzyme catalyses hydrogencarbonate + NH4(+) + 2 ATP = carbamoyl phosphate + 2 ADP + phosphate + 2 H(+). It functions in the pathway amino-acid biosynthesis; L-arginine biosynthesis; carbamoyl phosphate from bicarbonate: step 1/1. Its pathway is pyrimidine metabolism; UMP biosynthesis via de novo pathway; (S)-dihydroorotate from bicarbonate: step 1/3. Its function is as follows. Large subunit of the glutamine-dependent carbamoyl phosphate synthetase (CPSase). CPSase catalyzes the formation of carbamoyl phosphate from the ammonia moiety of glutamine, carbonate, and phosphate donated by ATP, constituting the first step of 2 biosynthetic pathways, one leading to arginine and/or urea and the other to pyrimidine nucleotides. The large subunit (synthetase) binds the substrates ammonia (free or transferred from glutamine from the small subunit), hydrogencarbonate and ATP and carries out an ATP-coupled ligase reaction, activating hydrogencarbonate by forming carboxy phosphate which reacts with ammonia to form carbamoyl phosphate. The sequence is that of Carbamoyl phosphate synthase large chain from Brucella melitensis biotype 1 (strain ATCC 23456 / CCUG 17765 / NCTC 10094 / 16M).